The following is a 776-amino-acid chain: Serine/threonine-protein kinase-like protein CCR2 (776 aa).

A signal peptide spans 1–22 (MQPNSHIFVIITISSLIITVSA). The Extracellular segment spans residues 23-432 (YGSTGTIAAA…QKEQREVRRL (410 aa)). Residues Asn-59, Asn-92, Asn-154, Asn-162, Asn-205, Asn-278, Asn-287, and Asn-350 are each glycosylated (N-linked (GlcNAc...) asparagine). The stretch at 341–396 (NCGDGWFAFNASILKESELTSLCSFHNLNICLRCGISCLEGYFPSSTCNPNADRVC) is one TNFR-Cys repeat. 3 disulfides stabilise this stretch: Cys-342–Cys-371, Cys-374–Cys-388, and Cys-378–Cys-396. Asn-404 carries N-linked (GlcNAc...) asparagine glycosylation. Residues 433 to 453 (VIIIGCSVLGFLVMLIGLSFI) traverse the membrane as a helical segment. Residues 454 to 776 (PKMTKGSKRD…DLIVKSGLTF (323 aa)) lie on the Cytoplasmic side of the membrane. The Protein kinase domain occupies 519–776 (FKEFNELGRG…DLIVKSGLTF (258 aa)). ATP is bound by residues 525–533 (LGRGSFGFV) and Lys-547. Asp-644 functions as the Proton acceptor in the catalytic mechanism.

Belongs to the protein kinase superfamily. Ser/Thr protein kinase family. As to quaternary structure, homodimer. As to expression, expressed in roots, leaves, shoot apical meristems (SAM), and floral buds.

It is found in the membrane. It catalyses the reaction L-seryl-[protein] + ATP = O-phospho-L-seryl-[protein] + ADP + H(+). It carries out the reaction L-threonyl-[protein] + ATP = O-phospho-L-threonyl-[protein] + ADP + H(+). Serine/threonine-protein kinase with low activity. The chain is Serine/threonine-protein kinase-like protein CCR2 (CCR2) from Arabidopsis thaliana (Mouse-ear cress).